The sequence spans 116 residues: uncharacterized protein (116 aa).

The chain crosses the membrane as a helical span at residues 58–78; it reads IIVDFKFIFQIFLILSFGFFA.

It is found in the membrane. This is an uncharacterized protein from Rickettsia prowazekii (strain Madrid E).